Reading from the N-terminus, the 430-residue chain is L-cysteine:1D-myo-inositol 2-amino-2-deoxy-alpha-D-glucopyranoside ligase (430 aa).

Zn(2+) is bound at residue cysteine 48. Residues 48–51, threonine 63, and 86–88 each bind L-cysteinyl-5'-AMP; these read CGIT and NIT. A 'HIGH' region motif is present at residues 50–60; it reads ITPYDSTHLGH. Residues 192-197 carry the 'ERGGDP' region motif; that stretch reads ERGGDP. Tryptophan 232 provides a ligand contact to L-cysteinyl-5'-AMP. Cysteine 236 serves as a coordination point for Zn(2+). 254–256 serves as a coordination point for L-cysteinyl-5'-AMP; the sequence is GSD. Histidine 261 provides a ligand contact to Zn(2+). Isoleucine 288 serves as a coordination point for L-cysteinyl-5'-AMP. The 'KMSKS' region signature appears at 294–298; that stretch reads KMSKS.

This sequence belongs to the class-I aminoacyl-tRNA synthetase family. MshC subfamily. As to quaternary structure, monomer. Requires Zn(2+) as cofactor.

It carries out the reaction 1D-myo-inositol 2-amino-2-deoxy-alpha-D-glucopyranoside + L-cysteine + ATP = 1D-myo-inositol 2-(L-cysteinylamino)-2-deoxy-alpha-D-glucopyranoside + AMP + diphosphate + H(+). Functionally, catalyzes the ATP-dependent condensation of GlcN-Ins and L-cysteine to form L-Cys-GlcN-Ins. The sequence is that of L-cysteine:1D-myo-inositol 2-amino-2-deoxy-alpha-D-glucopyranoside ligase (mshC) from Corynebacterium efficiens (strain DSM 44549 / YS-314 / AJ 12310 / JCM 11189 / NBRC 100395).